A 1170-amino-acid polypeptide reads, in one-letter code: Short transient receptor potential channel 2 (1170 aa).

Over 1–627 (MLMSLTDSKE…GWRGSTTIWK (627 aa)) the chain is Cytoplasmic. Disordered regions lie at residues 64 to 113 (SLSD…QTST), 142 to 231 (AHKA…QATG), and 322 to 342 (ESGS…VEES). Residues 74–85 (SPGSSGLNQNSS) are compositionally biased toward polar residues. The segment covering 158–177 (GEPDSSHPERAEPRAEEPNR) has biased composition (basic and acidic residues). ANK repeat units follow at residues 300–329 (KFPP…DPSG), 346–376 (SWRE…DFRQ), 377–405 (IHEA…REKG), and 429–458 (PGVT…TIAR). A helical transmembrane segment spans residues 628 to 648 (LFVAFLIFLTMPFLCIGYWLA). The Extracellular segment spans residues 649–658 (PKSRLGRLLK). A helical transmembrane segment spans residues 659–679 (IPVLKFLLHSASYLWFLIFLL). Topologically, residues 680–701 (GESLVMETQLSTFKGRSQSVWE) are cytoplasmic. A helical transmembrane segment spans residues 702 to 722 (TSLHMIWVTGFLWFECKEVWI). Residues 723–737 (EGLRSYLLDWWNFLD) lie on the Extracellular side of the membrane. Residues 738–758 (VVILSLYLASFALRLLLAGLA) form a helical membrane-spanning segment. At 759–788 (YMHCRDASDSSTCRYFTTAERSEWRTEDPQ) the chain is on the cytoplasmic side. Residues 789–809 (FLAEVLFAVTSMLSFTRLAYI) form a helical membrane-spanning segment. The Extracellular segment spans residues 810–832 (LPAHESLGTLQISIGKMIDDMIR). Residues 833 to 853 (FMFILMIILTAFLCGLNNIYV) traverse the membrane as a helical segment. Topologically, residues 854-898 (PYQETEKLGNFNETFQFLFWTMFGMEEHSVVDMPQFLVPEFVGRA) are cytoplasmic. The chain crosses the membrane as a helical span at residues 899 to 919 (MYGIFTIVMVIVLLNMLIAMI). Over 920 to 1170 (TNSFQKIEDD…GEDLETKGES (251 aa)) the chain is Extracellular. Residues 1030-1068 (RREFEETRRKDLGNRLTELTKTVSRLQSEVASVQKTVAA) are a coiled coil. Residues 1118–1170 (LEDSLDATGEAGTPASGESSSSSSAHVLVHREQEAEGAGDLPLGEDLETKGES) form a disordered region.

Belongs to the transient receptor (TC 1.A.4) family. STrpC subfamily. TRPC2 sub-subfamily. In terms of tissue distribution, expressed exclusively in vomeronasal organ neurons (sensory microvilli).

It localises to the membrane. Functionally, thought to form a receptor-activated calcium permeant cation channel. Probably is operated by a phosphatidylinositol second messenger system activated by receptor tyrosine kinases or G-protein coupled receptors. Is not activated by intracellular calcium store depletion. The protein is Short transient receptor potential channel 2 (Trpc2) of Rattus norvegicus (Rat).